The sequence spans 412 residues: UPF0754 membrane protein MAE_37850 (412 aa).

A run of 2 helical transmembrane segments spans residues 3–23 and 387–407; these read LPTL…GYFT and IVNL…IILI.

Belongs to the UPF0754 family.

It localises to the cell inner membrane. This is UPF0754 membrane protein MAE_37850 from Microcystis aeruginosa (strain NIES-843 / IAM M-2473).